The primary structure comprises 1400 residues: Tiny macrocysts protein C (1400 aa).

A run of 8 helical transmembrane segments spans residues 59-79, 112-132, 152-172, 196-216, 240-260, 266-286, 296-316, and 320-340; these read ILTI…GFKQ, IFFW…WYVA, FVST…LIGL, ANLS…IVGF, FDVY…LVDF, SIVY…ILPY, SGFY…MGIN, and TATT…IGYF. 2 disordered regions span residues 367–393 and 683–712; these read FNEI…SKVT and ERSG…RGKY. Residues 369 to 386 are compositionally biased toward basic and acidic residues; it reads EITKNEKSKTGDSKEKES. The next 4 helical transmembrane spans lie at 726–746, 975–995, 1162–1182, and 1342–1362; these read WLMI…LIVL, TMLY…AVLF, VLAI…TYSV, and VLTS…LLLF.

It localises to the membrane. This chain is Tiny macrocysts protein C (tmcC), found in Dictyostelium discoideum (Social amoeba).